Consider the following 290-residue polypeptide: 4-hydroxybenzoate octaprenyltransferase (290 aa).

The next 6 membrane-spanning stretches (helical) occupy residues 41–61 (WPLLAIFVLGTLLMRSAGCAM), 89–109 (WEAVAIAVVLAFISFLLIQPL), 133–153 (FFAIPQAYLGIAFGFGIPMAF), 158–178 (DTVPMLAWVMLIANIFWSVAY), 202–224 (FGRFDVAAVMLCYAATLGIYVWI), and 269–289 (WLGGVLFAGIAAHYLLAGTAG).

This sequence belongs to the UbiA prenyltransferase family. Mg(2+) serves as cofactor.

It localises to the cell inner membrane. It carries out the reaction all-trans-octaprenyl diphosphate + 4-hydroxybenzoate = 4-hydroxy-3-(all-trans-octaprenyl)benzoate + diphosphate. Its pathway is cofactor biosynthesis; ubiquinone biosynthesis. Its function is as follows. Catalyzes the prenylation of para-hydroxybenzoate (PHB) with an all-trans polyprenyl group. Mediates the second step in the final reaction sequence of ubiquinone-8 (UQ-8) biosynthesis, which is the condensation of the polyisoprenoid side chain with PHB, generating the first membrane-bound Q intermediate 3-octaprenyl-4-hydroxybenzoate. This chain is 4-hydroxybenzoate octaprenyltransferase, found in Burkholderia ambifaria (strain ATCC BAA-244 / DSM 16087 / CCUG 44356 / LMG 19182 / AMMD) (Burkholderia cepacia (strain AMMD)).